The chain runs to 94 residues: Large ribosomal subunit protein bL25 (94 aa).

Belongs to the bacterial ribosomal protein bL25 family. Part of the 50S ribosomal subunit; part of the 5S rRNA/L5/L18/L25 subcomplex. Contacts the 5S rRNA. Binds to the 5S rRNA independently of L5 and L18.

Functionally, this is one of the proteins that binds to the 5S RNA in the ribosome where it forms part of the central protuberance. The chain is Large ribosomal subunit protein bL25 from Erwinia tasmaniensis (strain DSM 17950 / CFBP 7177 / CIP 109463 / NCPPB 4357 / Et1/99).